Consider the following 195-residue polypeptide: MGANNQGKVFEANIEKSAADQKLFFYRIKDVNPMFLKRGAAVSKNKYDCFLFFKGYLFPFELKSTKSKSISFSEKIIKPQQIKYLREATQYPNIIPGFLFQFREPENKVYFVHINDFLTYKNIAEKQLKHTYKNKVNKASIPIAICEEIGTEVRSMKKKVNYTYYLNKLCGELIKKEQSRDKPLHTYNTPVKTGV.

The sequence is that of SPbeta prophage-derived uncharacterized protein YotM (yotM) from Bacillus subtilis (strain 168).